The primary structure comprises 211 residues: ATP phosphoribosyltransferase (211 aa).

It belongs to the ATP phosphoribosyltransferase family. Short subfamily. As to quaternary structure, heteromultimer composed of HisG and HisZ subunits.

It localises to the cytoplasm. The enzyme catalyses 1-(5-phospho-beta-D-ribosyl)-ATP + diphosphate = 5-phospho-alpha-D-ribose 1-diphosphate + ATP. It participates in amino-acid biosynthesis; L-histidine biosynthesis; L-histidine from 5-phospho-alpha-D-ribose 1-diphosphate: step 1/9. In terms of biological role, catalyzes the condensation of ATP and 5-phosphoribose 1-diphosphate to form N'-(5'-phosphoribosyl)-ATP (PR-ATP). Has a crucial role in the pathway because the rate of histidine biosynthesis seems to be controlled primarily by regulation of HisG enzymatic activity. This chain is ATP phosphoribosyltransferase, found in Lacticaseibacillus casei (strain BL23) (Lactobacillus casei).